Here is a 157-residue protein sequence, read N- to C-terminus: Endoribonuclease YbeY (157 aa).

Zn(2+) contacts are provided by His-114, His-118, and His-124.

It belongs to the endoribonuclease YbeY family. Zn(2+) serves as cofactor.

The protein resides in the cytoplasm. Its function is as follows. Single strand-specific metallo-endoribonuclease involved in late-stage 70S ribosome quality control and in maturation of the 3' terminus of the 16S rRNA. This is Endoribonuclease YbeY from Yersinia pseudotuberculosis serotype O:1b (strain IP 31758).